The sequence spans 305 residues: Fatty acid elongase 1 (305 aa).

7 helical membrane passes run 24-44 (MIANVDVVLYISFLYLGFVFI), 80-100 (VVWNLALSIFSIFGTSTVTPV), 129-149 (FWMGIFALSKIPELVDTIFLV), 158-178 (FLHWYHHVTVLLFSWHTYCVG), 183-203 (IWVAAMNYSVHSVMYLYFALA), 217-237 (YITIIQILQMVVGCYVTIFAL), and 257-277 (IQLVMYASYLYLFSKMFVASY). Positions 160-164 (HWYHH) match the HxxHH motif motif. Histidine 163 acts as the Nucleophile in catalysis. Residues 284-305 (PTVGGPSSTAGVSNGSVEKKVK) are disordered. Over residues 288–299 (GPSSTAGVSNGS) the composition is skewed to polar residues. N-linked (GlcNAc...) asparagine glycosylation is present at asparagine 297.

Belongs to the ELO family.

The protein localises to the endoplasmic reticulum membrane. It carries out the reaction an acyl-CoA + malonyl-CoA + H(+) = a 3-oxoacyl-CoA + CO2 + CoA. The protein operates within lipid metabolism; fatty acid biosynthesis. In terms of biological role, involved in the synthesis of fatty acids. Elongates C4 fatty acids to C10. The protein is Fatty acid elongase 1 of Trypanosoma brucei brucei (strain 927/4 GUTat10.1).